We begin with the raw amino-acid sequence, 146 residues long: Hemoglobin subunit beta (146 aa).

The Globin domain occupies 2 to 146 (QWSAEEKQLI…VAHALARKYH (145 aa)). Residues histidine 63 and histidine 92 each contribute to the heme b site.

Belongs to the globin family. In terms of assembly, heterotetramer of two alpha chains and two beta chains. In terms of tissue distribution, red blood cells.

Functionally, involved in oxygen transport from the lung to the various peripheral tissues. In Struthio camelus (Common ostrich), this protein is Hemoglobin subunit beta (HBB).